Here is an 80-residue protein sequence, read N- to C-terminus: UPF0248 protein YG5714_2801 (80 aa).

The protein belongs to the UPF0248 family.

The chain is UPF0248 protein YG5714_2801 from Saccharolobus islandicus (strain Y.G.57.14 / Yellowstone #1) (Sulfolobus islandicus).